The chain runs to 300 residues: Ornithine carbamoyltransferase (300 aa).

Residues 50 to 53 (STRT), Q77, R101, and 128 to 131 (HPCQ) each bind carbamoyl phosphate. L-ornithine is bound by residues N159, D219, and 223 to 224 (SM). Carbamoyl phosphate is bound by residues 257–258 (CL) and R285.

This sequence belongs to the aspartate/ornithine carbamoyltransferase superfamily. OTCase family.

The protein resides in the cytoplasm. The catalysed reaction is carbamoyl phosphate + L-ornithine = L-citrulline + phosphate + H(+). It functions in the pathway amino-acid degradation; L-arginine degradation via ADI pathway; carbamoyl phosphate from L-arginine: step 2/2. Its function is as follows. Reversibly catalyzes the transfer of the carbamoyl group from carbamoyl phosphate (CP) to the N(epsilon) atom of ornithine (ORN) to produce L-citrulline. The chain is Ornithine carbamoyltransferase from Haloquadratum walsbyi (strain DSM 16790 / HBSQ001).